A 66-amino-acid polypeptide reads, in one-letter code: uncharacterized protein (66 aa).

This is an uncharacterized protein from Methanocaldococcus jannaschii (strain ATCC 43067 / DSM 2661 / JAL-1 / JCM 10045 / NBRC 100440) (Methanococcus jannaschii).